We begin with the raw amino-acid sequence, 110 residues long: Holo-[acyl-carrier-protein] synthase (110 aa).

Mg(2+) contacts are provided by D8 and E54.

It belongs to the P-Pant transferase superfamily. AcpS family. It depends on Mg(2+) as a cofactor.

It localises to the cytoplasm. The enzyme catalyses apo-[ACP] + CoA = holo-[ACP] + adenosine 3',5'-bisphosphate + H(+). In terms of biological role, transfers the 4'-phosphopantetheine moiety from coenzyme A to a Ser of acyl-carrier-protein. This Mycoplasma mycoides subsp. mycoides SC (strain CCUG 32753 / NCTC 10114 / PG1) protein is Holo-[acyl-carrier-protein] synthase.